A 219-amino-acid chain; its full sequence is Mediator of RNA polymerase II transcription subunit 20 (219 aa).

The protein belongs to the Mediator complex subunit 20 family. In terms of assembly, component of the Mediator complex.

It is found in the nucleus. In terms of biological role, component of the Mediator complex, a coactivator involved in the regulated transcription of nearly all RNA polymerase II-dependent genes. Mediator functions as a bridge to convey information from gene-specific regulatory proteins to the basal RNA polymerase II transcription machinery. Mediator is recruited to promoters by direct interactions with regulatory proteins and serves as a scaffold for the assembly of a functional preinitiation complex with RNA polymerase II and the general transcription factors. This is Mediator of RNA polymerase II transcription subunit 20 (MED20) from Aedes aegypti (Yellowfever mosquito).